A 307-amino-acid chain; its full sequence is Aspartate carbamoyltransferase catalytic subunit (307 aa).

Carbamoyl phosphate is bound by residues Arg58 and Thr59. Residue Lys86 participates in L-aspartate binding. The carbamoyl phosphate site is built by Arg108, His136, and Gln139. The L-aspartate site is built by Arg169 and Arg223. Residues Gly264 and Pro265 each contribute to the carbamoyl phosphate site.

The protein belongs to the aspartate/ornithine carbamoyltransferase superfamily. ATCase family. Heterododecamer (2C3:3R2) of six catalytic PyrB chains organized as two trimers (C3), and six regulatory PyrI chains organized as three dimers (R2).

The catalysed reaction is carbamoyl phosphate + L-aspartate = N-carbamoyl-L-aspartate + phosphate + H(+). The protein operates within pyrimidine metabolism; UMP biosynthesis via de novo pathway; (S)-dihydroorotate from bicarbonate: step 2/3. Catalyzes the condensation of carbamoyl phosphate and aspartate to form carbamoyl aspartate and inorganic phosphate, the committed step in the de novo pyrimidine nucleotide biosynthesis pathway. The protein is Aspartate carbamoyltransferase catalytic subunit of Moorella thermoacetica (strain ATCC 39073 / JCM 9320).